Here is a 37-residue protein sequence, read N- to C-terminus: Large ribosomal subunit protein bL36 (37 aa).

This sequence belongs to the bacterial ribosomal protein bL36 family.

This chain is Large ribosomal subunit protein bL36 (rpmJ), found in Mycoplasma sp.